Reading from the N-terminus, the 167-residue chain is Lipoprotein signal peptidase (167 aa).

Helical transmembrane passes span 8–28 (TFLTLLLLASIDWVSKLVVLL), 46–66 (WGHFSFLIIPSFNEGAAFGLF), 68–88 (QYKIPLLIFRVCVILGLALFL), and 101–121 (IALTLILAGALGNVGDILLHG). Residues aspartate 125 and aspartate 143 contribute to the active site. Residues 139–159 (FNLADAFISIGTLLLIGHLYF) form a helical membrane-spanning segment.

The protein belongs to the peptidase A8 family.

Its subcellular location is the cell inner membrane. The catalysed reaction is Release of signal peptides from bacterial membrane prolipoproteins. Hydrolyzes -Xaa-Yaa-Zaa-|-(S,diacylglyceryl)Cys-, in which Xaa is hydrophobic (preferably Leu), and Yaa (Ala or Ser) and Zaa (Gly or Ala) have small, neutral side chains.. The protein operates within protein modification; lipoprotein biosynthesis (signal peptide cleavage). In terms of biological role, this protein specifically catalyzes the removal of signal peptides from prolipoproteins. The polypeptide is Lipoprotein signal peptidase (Chlamydia trachomatis serovar L2 (strain ATCC VR-902B / DSM 19102 / 434/Bu)).